We begin with the raw amino-acid sequence, 188 residues long: Nicotinamide-nucleotide adenylyltransferase (188 aa).

The segment at 166-188 is disordered; the sequence is SDSLERYAATGESLPESLDDLDD.

The protein belongs to the archaeal NMN adenylyltransferase family.

The protein resides in the cytoplasm. It carries out the reaction beta-nicotinamide D-ribonucleotide + ATP + H(+) = diphosphate + NAD(+). Its pathway is cofactor biosynthesis; NAD(+) biosynthesis; NAD(+) from nicotinamide D-ribonucleotide: step 1/1. This is Nicotinamide-nucleotide adenylyltransferase from Haloarcula marismortui (strain ATCC 43049 / DSM 3752 / JCM 8966 / VKM B-1809) (Halobacterium marismortui).